The primary structure comprises 132 residues: Small ribosomal subunit protein uS8 (132 aa).

This sequence belongs to the universal ribosomal protein uS8 family. In terms of assembly, part of the 30S ribosomal subunit. Contacts proteins S5 and S12.

In terms of biological role, one of the primary rRNA binding proteins, it binds directly to 16S rRNA central domain where it helps coordinate assembly of the platform of the 30S subunit. This is Small ribosomal subunit protein uS8 from Bartonella henselae (strain ATCC 49882 / DSM 28221 / CCUG 30454 / Houston 1) (Rochalimaea henselae).